The following is a 342-amino-acid chain: Cell cycle control protein 50C (342 aa).

Residues 1–33 (MEMMPQYDLSRLPENTALKQQTLPTQQLNLSAS) are Cytoplasmic-facing. The helical transmembrane segment at 34 to 54 (VVLSIFFITGGFCLSIGIILL) threads the bilayer. Topologically, residues 55-306 (LSAKSTKKIE…STLTWIGGGG (252 aa)) are extracellular. N-linked (GlcNAc...) asparagine glycans are attached at residues N66, N80, N89, and N205. Residues 307-327 (LFLGLTYTVTGALTLLASFAI) traverse the membrane as a helical segment. The Cytoplasmic segment spans residues 328–342 (LTIHLMLKRSKLNFL).

Belongs to the CDC50/LEM3 family. In terms of tissue distribution, specifically expressed in testis.

It localises to the membrane. This is Cell cycle control protein 50C (Tmem30c) from Mus musculus (Mouse).